The following is a 420-amino-acid chain: Glutamyl-tRNA reductase (420 aa).

Residues 49-52, serine 109, 114-116, and glutamine 120 contribute to the substrate site; these read TCNR and EPQ. Cysteine 50 functions as the Nucleophile in the catalytic mechanism. 189 to 194 is an NADP(+) binding site; that stretch reads GAGETI.

This sequence belongs to the glutamyl-tRNA reductase family. Homodimer.

It carries out the reaction (S)-4-amino-5-oxopentanoate + tRNA(Glu) + NADP(+) = L-glutamyl-tRNA(Glu) + NADPH + H(+). It functions in the pathway porphyrin-containing compound metabolism; protoporphyrin-IX biosynthesis; 5-aminolevulinate from L-glutamyl-tRNA(Glu): step 1/2. In terms of biological role, catalyzes the NADPH-dependent reduction of glutamyl-tRNA(Glu) to glutamate 1-semialdehyde (GSA). This chain is Glutamyl-tRNA reductase, found in Edwardsiella ictaluri (strain 93-146).